The chain runs to 109 residues: Sperm-specific class P protein 9/11 (109 aa).

The 108-residue stretch at 2-109 folds into the MSP domain; the sequence is SLTADPPACT…TVTIPMSATA (108 aa).

Expressed at higher level in testis.

The polypeptide is Sperm-specific class P protein 9/11 (ssp-9) (Caenorhabditis elegans).